We begin with the raw amino-acid sequence, 212 residues long: MSKGFLVSLEGPEGAGKTSVLEALLPILEEKGVEVLTTREPGGVLIGEKIREVILDPSHTQMDAKTELLLYIASRRQHLVEKVLPALEAGKLVIMDRFIDSSVAYQGFGRGLDIEAIDWLNQFATDGLKPDLTLYFDIEVEEGLARIAANSDREVNRLDLEGLDLHKKVRQGYLSLLDKEGNRIVKIDASLPLEQVVETTKAVLFDGMGLAK.

Residue 11–18 coordinates ATP; sequence GPEGAGKT.

It belongs to the thymidylate kinase family.

The enzyme catalyses dTMP + ATP = dTDP + ADP. Phosphorylation of dTMP to form dTDP in both de novo and salvage pathways of dTTP synthesis. This chain is Thymidylate kinase, found in Streptococcus pneumoniae serotype 19F (strain G54).